A 213-amino-acid chain; its full sequence is DELTA-actitoxin-Aas1a (213 aa).

The first 19 residues, 1–19 (MSRLIIAFIVVTMVCSAIA), serve as a signal peptide directing secretion. A propeptide spanning residues 20–34 (LPKKKVEPLEKDEKR) is cleaved from the precursor. The segment at 37–46 (AVAGAVIEGG) is plays an important role in the hemolytic activity. The N-terminal region stretch occupies residues 45–64 (GGNLVMSVLDRILEAIGDVN). Phosphocholine-binding residues include Ser88, Val121, Ser139, Pro141, Tyr167, Tyr171, and Tyr172. The interval 139-154 (SIPYDYNLYSNWWNVK) is trp-rich region, which is important for the binding to lipid membrane. A Cell attachment site, crucial for protein stability motif is present at residues 178 to 180 (KGD).

It belongs to the actinoporin family. Sea anemone subfamily. Octamer or nonamer in membranes. Monomer in the soluble state.

It is found in the secreted. Its subcellular location is the nematocyst. The protein localises to the target cell membrane. Its function is as follows. Pore-forming protein that forms cation-selective hydrophilic pores of around 1 nm and causes cytolysis. Pore formation is a multi-step process that involves specific recognition of membrane sphingomyelin (but neither cholesterol nor phosphatidylcholine) using aromatic rich region and adjacent phosphocholine (POC) binding site, firm binding to the membrane (mainly driven by hydrophobic interactions) accompanied by the transfer of the N-terminal region to the lipid-water interface and finally pore formation after oligomerization of monomers. This protein shows potent hemolytic activity (EC(50)=8.8 ng/ml) that is specifically inhibited by sphingomyelin. Shows no phospholipase A2 activity, nor antimicrobial activity against the four bacteria tested. Is lethal to crayfish. This is DELTA-actitoxin-Aas1a from Anthopleura asiatica (Sea anemone).